A 947-amino-acid polypeptide reads, in one-letter code: Microtubule cross-linking factor 3 (947 aa).

Positions 1–21 are cleaved as a signal peptide; the sequence is MSQPPIGGAAPATAAASPAAA. Disordered stretches follow at residues 1 to 251, 266 to 368, and 496 to 524; these read MSQP…SYWK, KERA…TLKN, and LSLKRRGSKDLPKSEKKAQQTPTEEDNED. Composition is skewed to low complexity over residues 9-24, 72-81, and 109-137; these read AAPATAAASPAAAATE, QQQLQQQQQQ, and APKGAAPGAVQPVAGAEAAPAATLAALGG. A compositionally biased stretch (basic and acidic residues) spans 141-151; it reads GPPEEPPRELE. Positions 164 to 180 are enriched in gly residues; that stretch reads GEGGGGGGEGGGAGGGS. Residues 214 to 236 show a composition bias toward low complexity; the sequence is ASPSPSSSSAGKTPGTGSRNSGS. Over residues 237 to 248 the composition is skewed to gly residues; the sequence is GVAGGGSGGGGS. Composition is skewed to low complexity over residues 287 to 297 and 304 to 325; these read SSRSSPVSGPP and AVASASPMAAAAEGPQQSAEGS. Residues 342–726 adopt a coiled-coil conformation; that stretch reads HPQQLQEQEE…GKVMQLQYEN (385 aa). Basic and acidic residues-rich tracts occupy residues 355–368 and 496–513; these read EMEKLREENETLKN and LSLKRRGSKDLPKSEKKA. A Phosphoserine modification is found at Ser-569. The interval 743–786 is disordered; that stretch reads GIRGSPRDSDAESDAGKKESDDDSRPPHRKREGPIGGESDSEEV. The span at 747–768 shows a compositional bias: basic and acidic residues; the sequence is SPRDSDAESDAGKKESDDDSRP. Ser-781 bears the Phosphoserine mark. Residues 811-835 are a coiled coil; sequence DRQQMKDIRSEAERLGKTIDRLIAD. A helical membrane pass occupies residues 915-935; sequence PIILLILILVLFSSLSYTTIF.

It belongs to the MTCL family.

Its subcellular location is the membrane. The sequence is that of Microtubule cross-linking factor 3 from Homo sapiens (Human).